A 736-amino-acid chain; its full sequence is Phosphoribosylformylglycinamidine synthase subunit PurL (736 aa).

His49 is a catalytic residue. ATP contacts are provided by Tyr52 and Lys91. Residue Glu93 coordinates Mg(2+). Residues Ser94–His97 and Arg116 each bind substrate. His95 acts as the Proton acceptor in catalysis. Asp117 contributes to the Mg(2+) binding site. Gln240 provides a ligand contact to substrate. Asp268 provides a ligand contact to Mg(2+). Glu312 to Gln314 is a binding site for substrate. ATP-binding residues include Asp493 and Gly530. Residue Asn531 coordinates Mg(2+). Ser533 is a substrate binding site.

It belongs to the FGAMS family. Monomer. Part of the FGAM synthase complex composed of 1 PurL, 1 PurQ and 2 PurS subunits.

Its subcellular location is the cytoplasm. It catalyses the reaction N(2)-formyl-N(1)-(5-phospho-beta-D-ribosyl)glycinamide + L-glutamine + ATP + H2O = 2-formamido-N(1)-(5-O-phospho-beta-D-ribosyl)acetamidine + L-glutamate + ADP + phosphate + H(+). It functions in the pathway purine metabolism; IMP biosynthesis via de novo pathway; 5-amino-1-(5-phospho-D-ribosyl)imidazole from N(2)-formyl-N(1)-(5-phospho-D-ribosyl)glycinamide: step 1/2. Its function is as follows. Part of the phosphoribosylformylglycinamidine synthase complex involved in the purines biosynthetic pathway. Catalyzes the ATP-dependent conversion of formylglycinamide ribonucleotide (FGAR) and glutamine to yield formylglycinamidine ribonucleotide (FGAM) and glutamate. The FGAM synthase complex is composed of three subunits. PurQ produces an ammonia molecule by converting glutamine to glutamate. PurL transfers the ammonia molecule to FGAR to form FGAM in an ATP-dependent manner. PurS interacts with PurQ and PurL and is thought to assist in the transfer of the ammonia molecule from PurQ to PurL. The sequence is that of Phosphoribosylformylglycinamidine synthase subunit PurL from Rhodopseudomonas palustris (strain BisB18).